The chain runs to 200 residues: Probable nicotinate-nucleotide adenylyltransferase (200 aa).

Belongs to the NadD family.

It catalyses the reaction nicotinate beta-D-ribonucleotide + ATP + H(+) = deamido-NAD(+) + diphosphate. It functions in the pathway cofactor biosynthesis; NAD(+) biosynthesis; deamido-NAD(+) from nicotinate D-ribonucleotide: step 1/1. Catalyzes the reversible adenylation of nicotinate mononucleotide (NaMN) to nicotinic acid adenine dinucleotide (NaAD). This is Probable nicotinate-nucleotide adenylyltransferase from Clostridium novyi (strain NT).